The sequence spans 571 residues: Medium/long-chain-fatty-acid--CoA ligase FadD8 (571 aa).

Residues 1-22 (MSTAGDDAVGVPPACGGRSDAV) form a disordered region.

This sequence belongs to the ATP-dependent AMP-binding enzyme family.

The enzyme catalyses a medium-chain fatty acid + ATP + CoA = a medium-chain fatty acyl-CoA + AMP + diphosphate. The catalysed reaction is a long-chain fatty acid + ATP + CoA = a long-chain fatty acyl-CoA + AMP + diphosphate. It catalyses the reaction hexanoate + ATP + CoA = hexanoyl-CoA + AMP + diphosphate. It carries out the reaction dodecanoate + ATP + CoA = dodecanoyl-CoA + AMP + diphosphate. The enzyme catalyses hexadecanoate + ATP + CoA = hexadecanoyl-CoA + AMP + diphosphate. It functions in the pathway lipid metabolism; fatty acid metabolism. Its function is as follows. Catalyzes the activation of medium/long-chain fatty acids as acyl-coenzyme A (acyl-CoA). The polypeptide is Medium/long-chain-fatty-acid--CoA ligase FadD8 (Mycobacterium tuberculosis (strain ATCC 25618 / H37Rv)).